The sequence spans 91 residues: Small ribosomal subunit protein bS16 (91 aa).

This sequence belongs to the bacterial ribosomal protein bS16 family.

This Enterococcus faecalis (strain ATCC 700802 / V583) protein is Small ribosomal subunit protein bS16.